We begin with the raw amino-acid sequence, 549 residues long: Oxygen-dependent choline dehydrogenase (549 aa).

4-33 (DFVIIGSGSAGSALAYRLSEDGKNSVLVIE) is an FAD binding site. His465 functions as the Proton acceptor in the catalytic mechanism. A disordered region spans residues 530 to 549 (PLARSNQEPWINPRAAVSDR).

Belongs to the GMC oxidoreductase family. Requires FAD as cofactor.

The enzyme catalyses choline + A = betaine aldehyde + AH2. The catalysed reaction is betaine aldehyde + NAD(+) + H2O = glycine betaine + NADH + 2 H(+). It functions in the pathway amine and polyamine biosynthesis; betaine biosynthesis via choline pathway; betaine aldehyde from choline (cytochrome c reductase route): step 1/1. Involved in the biosynthesis of the osmoprotectant glycine betaine. Catalyzes the oxidation of choline to betaine aldehyde and betaine aldehyde to glycine betaine at the same rate. In Rhizobium etli (strain ATCC 51251 / DSM 11541 / JCM 21823 / NBRC 15573 / CFN 42), this protein is Oxygen-dependent choline dehydrogenase.